Here is an 80-residue protein sequence, read N- to C-terminus: Acyl carrier protein (80 aa).

A Carrier domain is found at 4-79 (QEIFEKVKAV…DAVEYIKAKL (76 aa)). At S39 the chain carries O-(pantetheine 4'-phosphoryl)serine.

Belongs to the acyl carrier protein (ACP) family. Post-translationally, 4'-phosphopantetheine is transferred from CoA to a specific serine of apo-ACP by AcpS. This modification is essential for activity because fatty acids are bound in thioester linkage to the sulfhydryl of the prosthetic group.

It localises to the cytoplasm. Its pathway is lipid metabolism; fatty acid biosynthesis. In terms of biological role, carrier of the growing fatty acid chain in fatty acid biosynthesis. The polypeptide is Acyl carrier protein (Thermus thermophilus (strain ATCC BAA-163 / DSM 7039 / HB27)).